An 871-amino-acid chain; its full sequence is Tegument protein UL47 homolog (871 aa).

Positions 1 to 212 (MDQHHGARGG…DEDDMEVIRD (212 aa)) are disordered. The short motif at 13–33 (IRRPRRSIESRSHPFRATGNT) is the Nuclear localization signal element. 2 stretches are compositionally biased toward polar residues: residues 30 to 41 (TGNTQRTYSTPR) and 59 to 81 (EQAS…STSF). Composition is skewed to acidic residues over residues 114–134 (SSSE…EEDQ), 146–155 (SSDENDEEED), and 185–207 (SESE…EDDM).

The protein belongs to the alphaherpesvirinae HHV-1 UL47 family. As to quaternary structure, interacts with US3 kinase. Interacts with UL31 and UL34; these interactions seem important for efficient virion nuclear egress. Interacts with UL41/VHS. Post-translationally, phosphorylated by US3. This phosphorylation is required for proper nuclear localization.

Its subcellular location is the virion tegument. The protein resides in the host nucleus. It is found in the host cytoplasm. Tegument protein that can bind to various RNA transcripts. Plays a role in the attenuation of selective viral and cellular mRNA degradation by modulating the activity of host shutoff RNase UL41/VHS. Also plays a role in the primary envelopment of virions in the perinuclear space, probably by interacting with two nuclear egress proteins UL31 and UL34. This chain is Tegument protein UL47 homolog, found in Equine herpesvirus 1 (strain V592) (EHV-1).